A 1040-amino-acid chain; its full sequence is Eukaryotic translation initiation factor 3 subunit A (1040 aa).

Residues 92 to 121 (LKKFIELAEKKVTEAQTKADEIQSSLESAA) are a coiled coil. The PCI domain occupies 339–523 (MTKAASFVLL…GVLTFDSDVF (185 aa)). Residues 608–906 (RVIIEKKKEA…AEARRAARKA (299 aa)) are a coiled coil. 2 stretches are compositionally biased toward basic and acidic residues: residues 617-632 (AATDALQRKQREEETR) and 795-901 (EVSE…EARR). Disordered stretches follow at residues 617-641 (AATDALQRKQREEETRKRIRTQQLQ) and 795-1040 (EVSE…QQNQ). 4 stretches are compositionally biased toward low complexity: residues 908 to 917 (LEPAAPAARP), 945 to 955 (KEAAGGAAPEA), 978 to 993 (SGSSAAPAAPPSNGAP), and 1004 to 1018 (SSSSQPPSRTQTPGS).

It belongs to the eIF-3 subunit A family. In terms of assembly, component of the eukaryotic translation initiation factor 3 (eIF-3) complex.

It localises to the cytoplasm. Its function is as follows. RNA-binding component of the eukaryotic translation initiation factor 3 (eIF-3) complex, which is involved in protein synthesis of a specialized repertoire of mRNAs and, together with other initiation factors, stimulates binding of mRNA and methionyl-tRNAi to the 40S ribosome. The eIF-3 complex specifically targets and initiates translation of a subset of mRNAs involved in cell proliferation. The protein is Eukaryotic translation initiation factor 3 subunit A (tif32) of Aspergillus terreus (strain NIH 2624 / FGSC A1156).